A 222-amino-acid chain; its full sequence is MFTKEVTDSKLYKWFNERLEIQAISDDISSKYVPPHVNIFYCLGGITLTCFIIQFATGFAMTFYYKPTVAEAFTSVQYIMNEVNFGWLIRSIHRWSASMMVLMMILHIFRVYLTGGFKRPRELTWITGVIMATITVSFGVTGYSLPWDQVGYWAVKIVSGVPAAIPVVGDQMVELLRGGASVGQATLTRFYSLHTFVLPWLIAVFMLAHFLMIRKQGISGPL.

Residues 39-59 form a helical membrane-spanning segment; it reads IFYCLGGITLTCFIIQFATGF. Residue C42 participates in heme c binding. 2 residues coordinate heme b: H93 and H107. 3 consecutive transmembrane segments (helical) span residues 97–117, 123–143, and 193–213; these read ASMM…TGGF, LTWI…VTGY, and LHTF…FLMI. 2 residues coordinate heme b: H194 and H209.

This sequence belongs to the cytochrome b family. PetB subfamily. The 4 large subunits of the cytochrome b6-f complex are cytochrome b6, subunit IV (17 kDa polypeptide, PetD), cytochrome f and the Rieske protein, while the 4 small subunits are PetG, PetL, PetM and PetN. The complex functions as a dimer. Heme b serves as cofactor. The cofactor is heme c.

The protein localises to the cellular thylakoid membrane. Functionally, component of the cytochrome b6-f complex, which mediates electron transfer between photosystem II (PSII) and photosystem I (PSI), cyclic electron flow around PSI, and state transitions. The protein is Cytochrome b6 (petB) of Picosynechococcus sp. (strain ATCC 27264 / PCC 7002 / PR-6) (Agmenellum quadruplicatum).